The chain runs to 372 residues: Alanine dehydrogenase 2 (372 aa).

Residue His-95 is part of the active site. An NAD(+)-binding site is contributed by 169–199 (KVTIIGGGQAGTNAAKIALGLGADVTILDVN).

The protein belongs to the AlaDH/PNT family.

The catalysed reaction is L-alanine + NAD(+) + H2O = pyruvate + NH4(+) + NADH + H(+). It functions in the pathway amino-acid degradation; L-alanine degradation via dehydrogenase pathway; NH(3) and pyruvate from L-alanine: step 1/1. In terms of biological role, may play a role in cell wall synthesis as L-alanine is an important constituent of the peptidoglycan layer. In Staphylococcus aureus (strain COL), this protein is Alanine dehydrogenase 2 (ald2).